A 202-amino-acid polypeptide reads, in one-letter code: Holliday junction branch migration complex subunit RuvA (202 aa).

The segment at 1–62 is domain I; it reads MYEYLHGLIT…DTAQTLYGFS (62 aa). A domain II region spans residues 63–141; it reads DFAEKQLFLK…DLAPATDDNT (79 aa). The segment at 142 to 151 is flexible linker; that stretch reads LFTPEVAPTT. The segment at 152–202 is domain III; sequence TENPQLADALAALTALGYRETAVKKITAQLRQFNGQTTNDYLSEGLRLLTK.

The protein belongs to the RuvA family. In terms of assembly, homotetramer. Forms an RuvA(8)-RuvB(12)-Holliday junction (HJ) complex. HJ DNA is sandwiched between 2 RuvA tetramers; dsDNA enters through RuvA and exits via RuvB. An RuvB hexamer assembles on each DNA strand where it exits the tetramer. Each RuvB hexamer is contacted by two RuvA subunits (via domain III) on 2 adjacent RuvB subunits; this complex drives branch migration. In the full resolvosome a probable DNA-RuvA(4)-RuvB(12)-RuvC(2) complex forms which resolves the HJ.

Its subcellular location is the cytoplasm. The RuvA-RuvB-RuvC complex processes Holliday junction (HJ) DNA during genetic recombination and DNA repair, while the RuvA-RuvB complex plays an important role in the rescue of blocked DNA replication forks via replication fork reversal (RFR). RuvA specifically binds to HJ cruciform DNA, conferring on it an open structure. The RuvB hexamer acts as an ATP-dependent pump, pulling dsDNA into and through the RuvAB complex. HJ branch migration allows RuvC to scan DNA until it finds its consensus sequence, where it cleaves and resolves the cruciform DNA. The sequence is that of Holliday junction branch migration complex subunit RuvA from Levilactobacillus brevis (strain ATCC 367 / BCRC 12310 / CIP 105137 / JCM 1170 / LMG 11437 / NCIMB 947 / NCTC 947) (Lactobacillus brevis).